The following is a 699-amino-acid chain: MSHEDRGGDYYPMMDDPEDRNFIQAKYPNSTGHMSSGGGSNHMSFDDNHGIEMLRDDEHSLLHESPVSIPAIHNLDSFLTDVYNYFRGKGFMCIFFNDLFELVSSLFVVLFFTFLVCFVDYSKLFSEQMPPPALRESVNFSAPIPIWLMVFLVIFSLYWLSKLFSFFSSIKTNWEISSFYKNTLKINEDDIQTIEWREVVSKIVLVPRLCIVKENMNALDIANRIMRKENYIIGLINQRILNLSIPFPFLRNLTFITKTLEWSLMYSLFNYIFDENGIIKSEFQDPTQRKRLSRGLSRRFMTIGILGLFTTPFIFFFLLINFFFEYAEELKNRPGSLFSREWSPLARWEFRELNELPHYFQNRLNLSYSHANQYVESFPSQMLSTIAKFISFLFGSVLAVFIVLGIVSDHFIMNYQIFDRTPIWYIGILGTIVAITRSLIVDENQVFQPAKHMARTVQNTHYLPMSWVGKTHTHKVRDEFLVLFEYRIVDFVRDIFSVLFTPFILIFSLPKSSQAIIDFFGNNTVVLEGVGPICQLGDFSNIRKLGDNSFGSLNHSQNKISLTNNAKLEKSIINFKCLNPEWNTDNNELLQNLNEFSKIKNNNNNNNNNGSNNHIGNHSQLPTTSVDDFQFIHDSHYIPHEIIDAVLGTHHHSQQSNNNAPRFKTGRVDQNILNAVNDLHQSFYESQYKHKNDNFVNSI.

The Cytoplasmic portion of the chain corresponds to 1 to 98 (MSHEDRGGDY…KGFMCIFFND (98 aa)). The helical transmembrane segment at 99–119 (LFELVSSLFVVLFFTFLVCFV) threads the bilayer. Residues 120–139 (DYSKLFSEQMPPPALRESVN) are Lumenal-facing. Asparagine 139 carries an N-linked (GlcNAc...) asparagine glycan. Residues 140-160 (FSAPIPIWLMVFLVIFSLYWL) form a helical membrane-spanning segment. At 161–299 (SKLFSFFSSI…KRLSRGLSRR (139 aa)) the chain is on the cytoplasmic side. The stretch at 300-320 (FMTIGILGLFTTPFIFFFLLI) is an intramembrane region. Over 321–385 (NFFFEYAEEL…ESFPSQMLST (65 aa)) the chain is Cytoplasmic. A helical membrane pass occupies residues 386–406 (IAKFISFLFGSVLAVFIVLGI). Over 407–420 (VSDHFIMNYQIFDR) the chain is Lumenal. Residues 421-441 (TPIWYIGILGTIVAITRSLIV) form a helical membrane-spanning segment. Residues 442-487 (DENQVFQPAKHMARTVQNTHYLPMSWVGKTHTHKVRDEFLVLFEYR) are Cytoplasmic-facing. The stretch at 488 to 508 (IVDFVRDIFSVLFTPFILIFS) is an intramembrane region. Topologically, residues 509-699 (LPKSSQAIID…HKNDNFVNSI (191 aa)) are cytoplasmic. The segment covering 599–618 (IKNNNNNNNNNGSNNHIGNH) has biased composition (low complexity). The segment at 599–620 (IKNNNNNNNNNGSNNHIGNHSQ) is disordered.

Belongs to the ATG9 family. As to quaternary structure, homotrimer; forms a homotrimer with a central pore that forms a path between the two membrane leaflets.

It is found in the preautophagosomal structure membrane. The protein resides in the cytoplasmic vesicle membrane. The enzyme catalyses a 1,2-diacyl-sn-glycero-3-phosphocholine(in) = a 1,2-diacyl-sn-glycero-3-phosphocholine(out). It carries out the reaction a 1,2-diacyl-sn-glycero-3-phospho-L-serine(in) = a 1,2-diacyl-sn-glycero-3-phospho-L-serine(out). It catalyses the reaction a 1,2-diacyl-sn-glycero-3-phosphoethanolamine(in) = a 1,2-diacyl-sn-glycero-3-phosphoethanolamine(out). In terms of biological role, phospholipid scramblase involved in autophagy by mediating autophagosomal membrane expansion. Cycles between the preautophagosomal structure/phagophore assembly site (PAS) and the cytoplasmic vesicle pool and supplies membrane for the growing autophagosome. Lipid scramblase activity plays a key role in preautophagosomal structure/phagophore assembly by distributing the phospholipids that arrive through ATG2 from the cytoplasmic to the luminal leaflet of the bilayer, thereby driving autophagosomal membrane expansion. Required for lipopolysaccharide (LPS)-enhanced bacterial clearance through the autophagic pathway. This is Autophagy-related protein 9 (atg9) from Dictyostelium discoideum (Social amoeba).